The sequence spans 217 residues: GTP cyclohydrolase 1 (217 aa).

Residues Cys-109, His-112, and Cys-180 each contribute to the Zn(2+) site.

The protein belongs to the GTP cyclohydrolase I family. As to quaternary structure, homomer.

The enzyme catalyses GTP + H2O = 7,8-dihydroneopterin 3'-triphosphate + formate + H(+). It participates in cofactor biosynthesis; 7,8-dihydroneopterin triphosphate biosynthesis; 7,8-dihydroneopterin triphosphate from GTP: step 1/1. This chain is GTP cyclohydrolase 1, found in Aliivibrio salmonicida (strain LFI1238) (Vibrio salmonicida (strain LFI1238)).